A 380-amino-acid polypeptide reads, in one-letter code: 1-deoxy-D-xylulose 5-phosphate reductoisomerase (380 aa).

The NADPH site is built by Thr-10, Gly-11, Ser-12, Ile-13, Gly-35, Arg-36, Asn-37, and Asn-121. Lys-122 provides a ligand contact to 1-deoxy-D-xylulose 5-phosphate. An NADPH-binding site is contributed by Glu-123. Asp-147 lines the Mn(2+) pocket. Residues Ser-148, Glu-149, Ser-173, and His-196 each coordinate 1-deoxy-D-xylulose 5-phosphate. Residue Glu-149 participates in Mn(2+) binding. Gly-202 lines the NADPH pocket. 4 residues coordinate 1-deoxy-D-xylulose 5-phosphate: Ser-209, Asn-214, Lys-215, and Glu-218. Glu-218 lines the Mn(2+) pocket.

This sequence belongs to the DXR family. Mg(2+) serves as cofactor. Requires Mn(2+) as cofactor.

The catalysed reaction is 2-C-methyl-D-erythritol 4-phosphate + NADP(+) = 1-deoxy-D-xylulose 5-phosphate + NADPH + H(+). The protein operates within isoprenoid biosynthesis; isopentenyl diphosphate biosynthesis via DXP pathway; isopentenyl diphosphate from 1-deoxy-D-xylulose 5-phosphate: step 1/6. In terms of biological role, catalyzes the NADPH-dependent rearrangement and reduction of 1-deoxy-D-xylulose-5-phosphate (DXP) to 2-C-methyl-D-erythritol 4-phosphate (MEP). The chain is 1-deoxy-D-xylulose 5-phosphate reductoisomerase from Agathobacter rectalis (strain ATCC 33656 / DSM 3377 / JCM 17463 / KCTC 5835 / VPI 0990) (Eubacterium rectale).